The sequence spans 144 residues: Peptide methionine sulfoxide reductase MsrB (144 aa).

Residues 5–128 enclose the MsrB domain; that stretch reads QEELRQRIGH…NSAALDFIPY (124 aa). The active-site Nucleophile is the C117.

The protein belongs to the MsrB Met sulfoxide reductase family.

It catalyses the reaction L-methionyl-[protein] + [thioredoxin]-disulfide + H2O = L-methionyl-(R)-S-oxide-[protein] + [thioredoxin]-dithiol. The chain is Peptide methionine sulfoxide reductase MsrB from Streptococcus agalactiae serotype Ia (strain ATCC 27591 / A909 / CDC SS700).